A 396-amino-acid chain; its full sequence is Protein ANTAGONIST OF LIKE HETEROCHROMATIN PROTEIN 1 (396 aa).

Composition is skewed to basic residues over residues 1–12 (MAPVKQKKKNKK) and 20–29 (KLAKNKEKKR). The interval 1–29 (MAPVKQKKKNKKKPLDKAKKLAKNKEKKR) is disordered. Positions 6 to 13 (QKKKNKKK) match the Nuclear localization signal motif. The 166-residue stretch at 183–348 (IDTTHIIMTL…IILVCCLLHN (166 aa)) folds into the DDE Tnp4 domain.

This sequence belongs to the HARBI1 family. In terms of assembly, interacts with core components of POLYCOMB REPRESSIVE COMPLEX 2 (PRC2), a PcG protein complex with H3K27me3 histone methyltransferase activity. Associates with plant-specific PRC2 accessory components such as MSI1, EMF2, VRN2, FIE and CLF. A divalent metal cation is required as a cofactor. Expressed in roots, inflorescence stems, seedlings, leaves, flower buds, inflorescences, and siliques.

It localises to the nucleus. Transposase-derived protein that may have nuclease activity. Antagonist of polycomb-group (PcG) protein-mediated chromatin silencing, probably by preventing the association of POLYCOMB REPRESSIVE COMPLEX 2 (PRC2) with its accessory components. Needed for full reactivation of several floral homeotic genes that are repressed by PcG. This is Protein ANTAGONIST OF LIKE HETEROCHROMATIN PROTEIN 1 from Arabidopsis thaliana (Mouse-ear cress).